The sequence spans 177 residues: Large ribosomal subunit protein uL6 (177 aa).

This sequence belongs to the universal ribosomal protein uL6 family. In terms of assembly, part of the 50S ribosomal subunit.

In terms of biological role, this protein binds to the 23S rRNA, and is important in its secondary structure. It is located near the subunit interface in the base of the L7/L12 stalk, and near the tRNA binding site of the peptidyltransferase center. This Saccharophagus degradans (strain 2-40 / ATCC 43961 / DSM 17024) protein is Large ribosomal subunit protein uL6.